The chain runs to 307 residues: E3 ubiquitin-protein ligase PHF7 (307 aa).

The C2HC pre-PHD-type zinc-finger motif lies at Ser30 to Leu68. The Zn(2+) site is built by Cys33, Cys36, His58, and Cys61. The interval Arg67–Arg92 is required for interaction and ubiquitination of the nucleosome core particle. The PHD-type zinc-finger motif lies at Lys96–Arg145. The Zn(2+) site is built by Cys98, Cys101, Cys110, Cys115, His120, Cys123, Cys141, His144, Cys160, Cys163, Cys179, Cys180, His186, Cys189, Cys204, Cys207, Cys248, Cys253, Cys273, Cys276, His282, Cys285, Cys297, and Cys300. The required for interaction with ubiquitinated UBE2D2 stretch occupies residues Ile150–Ser307. The segment at Cys160 to Asn208 adopts an RING-type; degenerate zinc-finger fold. The required for association with and ubiquitination of H3 stretch occupies residues Arg244 to Leu301.

As to quaternary structure, interacts with MEF2C; the interaction promotes MEF2C binding to its transcription targets. Interacts with GATA4; the interaction promotes GATA4 binding to its transcription targets. Interacts with UBE2D2; the interaction inhibits cleavage of PHF7 and promotes association of the complex with the nucleosome core particle. As to expression, expressed in Leydig cells and in developing spermatids (at protein level). Highly expressed in Sertoli cells in testis.

It is found in the nucleus. The enzyme catalyses S-ubiquitinyl-[E2 ubiquitin-conjugating enzyme]-L-cysteine + [acceptor protein]-L-lysine = [E2 ubiquitin-conjugating enzyme]-L-cysteine + N(6)-ubiquitinyl-[acceptor protein]-L-lysine.. It functions in the pathway protein modification; protein ubiquitination. E3 ubiquitin-protein ligase which ubiquitinates histone H3 at 'Lys-14'. Required for male fertility, via inhibition of SPOP-mediated BRDT degradation when in the presence of acetylated histone H4 in early condensing spermatids. Stabilization of BRDT allows it to facilitate histone removal in early condensing spermatids and promote the progression of histone-to-protamine exchange. Promotes the expression of steroidogenesis proteins in the testes, and as a result plays a role in maintaining testosterone levels and repressing osteoclastogenesis. Promotes transcription of cardiac enhancer genes by facilitating binding of cardiac transcription factors such as MEF2C and GATA4 to target gene promoters. Ubiquitinates histone H4. Ubiquitinates histone H2A and H3 as part of the nucleosome core particle. This chain is E3 ubiquitin-protein ligase PHF7, found in Mus musculus (Mouse).